A 206-amino-acid polypeptide reads, in one-letter code: Protein GET1 (206 aa).

Residues Met-1–Leu-4 are Lumenal-facing. Residues Leu-5–Ala-24 traverse the membrane as a helical segment. Over Thr-25 to Arg-110 the chain is Cytoplasmic. Residues Ala-75–Ser-100 are a coiled coil. A helical transmembrane segment spans residues Trp-111–Phe-131. Residues Thr-132–Thr-155 are Lumenal-facing. Residues Val-156–Val-172 traverse the membrane as a helical segment. Residues Gly-173–Gln-206 lie on the Cytoplasmic side of the membrane.

This sequence belongs to the WRB/GET1 family. Interacts with GET3.

Its subcellular location is the endoplasmic reticulum membrane. Its function is as follows. Required for the post-translational delivery of tail-anchored (TA) proteins to the endoplasmic reticulum. Acts as a membrane receptor for soluble GET3, which recognizes and selectively binds the transmembrane domain of TA proteins in the cytosol. This Ajellomyces capsulatus (strain G186AR / H82 / ATCC MYA-2454 / RMSCC 2432) (Darling's disease fungus) protein is Protein GET1.